The chain runs to 450 residues: uncharacterized protein (450 aa).

Residues 1–58 (MQKNQIVDLEITDLSYEAMGVAHLDGMTVFVNNALPGEIVSAKLLKVKKNFAFAKIEK) enclose the TRAM domain. S-adenosyl-L-methionine-binding residues include Gln280, Tyr309, Glu330, and Asp378. Cys405 acts as the Nucleophile in catalysis.

It belongs to the class I-like SAM-binding methyltransferase superfamily. RNA M5U methyltransferase family.

This is an uncharacterized protein from Lactobacillus johnsonii (strain CNCM I-12250 / La1 / NCC 533).